The sequence spans 281 residues: DegV domain-containing protein spr0652 (281 aa).

Residues 3-280 (WKIIADSGCD…EGGLLMGYEI (278 aa)) form the DegV domain. Positions 63 and 91 each coordinate hexadecanoate.

In terms of biological role, may bind long-chain fatty acids, such as palmitate, and may play a role in lipid transport or fatty acid metabolism. This Streptococcus pneumoniae (strain ATCC BAA-255 / R6) protein is DegV domain-containing protein spr0652.